Reading from the N-terminus, the 302-residue chain is MDVLRTPDERFEGLADWSFAPHYTEVTDADGTALRIHHVDEGPKDQRPILLMHGEPSWAYLYRKVIAELVAKGHRVVAPDLVGFGRSDKPAKRTDYTYERHVAWMSAWLEQNDLKDIVLFCQDWGGLIGLRLVAAFPERFSAVVVSNTGLPIGVGKSEGFEAWLNFSQNTPELPVGFILNGGTARDLSDAERSAYDAPFPDESYKEGARIFPALVPITPEHASVEENKAAWAVLETFDKPFVTAFSDADPITRGGEAMFLARVPGTKNVAHTTLKGGHFVQEDSPVEIAALLDGLVAGLPQA.

The AB hydrolase-1 domain maps to 48 to 152; it reads PILLMHGEPS…VVVSNTGLPI (105 aa). Aspartate 123 (nucleophile) is an active-site residue. Aspartate 249 acts as the Proton donor in catalysis. Residue histidine 278 is the Proton acceptor of the active site.

It belongs to the haloalkane dehalogenase family. Type 1 subfamily. Monomer.

The enzyme catalyses 1-haloalkane + H2O = a halide anion + a primary alcohol + H(+). In terms of biological role, catalyzes hydrolytic cleavage of carbon-halogen bonds in halogenated aliphatic compounds, leading to the formation of the corresponding primary alcohols, halide ions and protons. In Caulobacter vibrioides (strain ATCC 19089 / CIP 103742 / CB 15) (Caulobacter crescentus), this protein is Haloalkane dehalogenase.